The sequence spans 556 residues: MNSLEQVKGLIKEEIQAAVLKAELATEEQIPNVVLESPKDKTNGDFSTNMAMQLARVAKKAPRMIAEELVANFDKAKASIEKIEIAGPGFINFYMDNSYLTDLIPTIVNAGEAYGETNTGKGEKVQVEFVSANPTGDLHLGHARGAAVGDTLCNLLAKAGYDVSREYYINDAGNQIHNLALSVEARYMQALGLEKEMPEDGYHGADIIGIGKRLAEEFGDRYAKADEKESYEFYREYGLKYELAKLQKDLESFRVKFDVWFSETSLYKNGKIDQALAVLKERDEIFEEDGATWFRSMTYGDDKNRVLIKNDGSYTYLTPDIAYHRDKLERGFDKLINIWGADHHGYIPRMKAAIQALGYDKETLEVEIIQMVQLYQNGEKMKMSKRTGKAVTLRELMEEVGVDAMRYFFAMRSGDSHLDFDMDLAVSKSNENPVYYAQYAHARVCSILRQGEELGLATGGDVNYKLVTSEKEVELLKKLGEFPAVVADAAQKRLPHRITNYAFELAATLHSFYNAEKVLNQDNLELSKARYELMKAVRTTLQNALAIVGVSAPEKM.

The 'HIGH' region motif lies at 132 to 142; that stretch reads ANPTGDLHLGH.

The protein belongs to the class-I aminoacyl-tRNA synthetase family. As to quaternary structure, monomer.

Its subcellular location is the cytoplasm. The enzyme catalyses tRNA(Arg) + L-arginine + ATP = L-arginyl-tRNA(Arg) + AMP + diphosphate. The chain is Arginine--tRNA ligase from Bacillus cereus (strain ATCC 14579 / DSM 31 / CCUG 7414 / JCM 2152 / NBRC 15305 / NCIMB 9373 / NCTC 2599 / NRRL B-3711).